We begin with the raw amino-acid sequence, 863 residues long: Adenosylcobalamin biosynthesis bifunctional protein CobDQ (863 aa).

The putative threonine-phosphate decarboxylase stretch occupies residues 1–373 (MNLPEHGGNL…LKSRKKTPSI (373 aa)). O-phospho-L-threonine is bound by residues 6 to 7 (HG), Asn30, and Asn159. Lys214 is subject to N6-(pyridoxal phosphate)lysine. O-phospho-L-threonine-binding residues include Arg323 and Arg337. Residues 374–863 (MFQGTASNVG…NLIYRKLGLG (490 aa)) form a cobyric acid synthase region. Residues 622-810 (RLDVVLIDIP…IHGIFDKDEF (189 aa)) enclose the GATase cobBQ-type domain. Cys704 serves as the catalytic Nucleophile. His802 is an active-site residue.

This sequence in the N-terminal section; belongs to the class-II pyridoxal-phosphate-dependent aminotransferase family. The protein in the C-terminal section; belongs to the CobB/CobQ family. CobQ subfamily. Pyridoxal 5'-phosphate is required as a cofactor.

It carries out the reaction O-phospho-L-threonine + H(+) = (R)-1-aminopropan-2-yl phosphate + CO2. Its pathway is cofactor biosynthesis; adenosylcobalamin biosynthesis. Functionally, catalyzes two activities which are involved in the adenosylcobalamin biosynthesis: decarboxylates L-threonine-O-3-phosphate to yield (R)-1-amino-2-propanol O-2-phosphate, the precursor for the linkage between the nucleotide loop and the corrin ring in cobalamin, and catalyzes amidations at positions B, D, E, and G on adenosylcobyrinic A,C-diamide. NH(2) groups are provided by glutamine, and one molecule of ATP is hydrogenolyzed for each amidation. The polypeptide is Adenosylcobalamin biosynthesis bifunctional protein CobDQ (cobDQ) (Leptospira interrogans serogroup Icterohaemorrhagiae serovar Lai (strain 56601)).